Here is a 432-residue protein sequence, read N- to C-terminus: Cyclic 2,3-diphosphoglycerate synthetase (432 aa).

Belongs to the cyclic 2,3-diphosphoglycerate synthetase family.

It localises to the cytoplasm. It carries out the reaction (2R)-2,3-bisphosphoglycerate + ATP + H(+) = cyclic (2R)-2,3-bisphosphoglycerate + ADP + phosphate. Functionally, catalyzes the formation of cyclic 2,3-diphosphoglycerate (cDPG) by formation of an intramolecular phosphoanhydride bond at the expense of ATP. This is Cyclic 2,3-diphosphoglycerate synthetase from Thermococcus kodakarensis (strain ATCC BAA-918 / JCM 12380 / KOD1) (Pyrococcus kodakaraensis (strain KOD1)).